The primary structure comprises 196 residues: Glycerol-3-phosphate acyltransferase (196 aa).

Transmembrane regions (helical) follow at residues 1-21 (MIIL…GYLT), 53-73 (AITA…GSLL), 78-98 (GALV…FLKF), 112-132 (IMTS…VMLI), and 152-172 (LLFG…VMIF).

This sequence belongs to the PlsY family. As to quaternary structure, probably interacts with PlsX.

It is found in the cell membrane. It catalyses the reaction an acyl phosphate + sn-glycerol 3-phosphate = a 1-acyl-sn-glycero-3-phosphate + phosphate. It functions in the pathway lipid metabolism; phospholipid metabolism. Its function is as follows. Catalyzes the transfer of an acyl group from acyl-phosphate (acyl-PO(4)) to glycerol-3-phosphate (G3P) to form lysophosphatidic acid (LPA). This enzyme utilizes acyl-phosphate as fatty acyl donor, but not acyl-CoA or acyl-ACP. This chain is Glycerol-3-phosphate acyltransferase, found in Carboxydothermus hydrogenoformans (strain ATCC BAA-161 / DSM 6008 / Z-2901).